The chain runs to 188 residues: Ribosome maturation factor RimM (188 aa).

A PRC barrel domain is found at 112–187 (SDSYYWVDLI…LLTLDWQSDW (76 aa)).

It belongs to the RimM family. As to quaternary structure, binds ribosomal protein uS19.

The protein localises to the cytoplasm. Its function is as follows. An accessory protein needed during the final step in the assembly of 30S ribosomal subunit, possibly for assembly of the head region. Essential for efficient processing of 16S rRNA. May be needed both before and after RbfA during the maturation of 16S rRNA. It has affinity for free ribosomal 30S subunits but not for 70S ribosomes. This is Ribosome maturation factor RimM from Polynucleobacter asymbioticus (strain DSM 18221 / CIP 109841 / QLW-P1DMWA-1) (Polynucleobacter necessarius subsp. asymbioticus).